The following is a 597-amino-acid chain: TOX high mobility group box family member 4 (597 aa).

Disordered regions lie at residues Gly160–Lys224 and Val520–Pro546. A compositionally biased stretch (basic residues) spans Lys207–Lys217. The short motif at Lys212–Lys217 is the Nuclear localization signal element. The HMG box DNA-binding region spans Pro222–Lys290.

As to quaternary structure, component of the PNUTS-PP1 phosphatase complex.

It localises to the nucleus. It is found in the chromosome. Its function is as follows. Transcription factor that modulates cell fate reprogramming from the somatic state to the pluripotent and neuronal fate. Also acts as a regulatory component of protein phosphatase 1 (PP1) complexes. Component of the PNUTS-PP1 protein phosphatase complex, a PP1 complex that regulates RNA polymerase II transcription pause-release. PNUTS-PP1 also plays a role in the control of chromatin structure and cell cycle progression during the transition from mitosis into interphase. In Xenopus tropicalis (Western clawed frog), this protein is TOX high mobility group box family member 4 (tox4).